A 310-amino-acid chain; its full sequence is tRNA dimethylallyltransferase (310 aa).

14 to 21 (GPTASGKS) contributes to the ATP binding site. Substrate is bound at residue 16–21 (TASGKS). Interaction with substrate tRNA regions lie at residues 39 to 42 (DSMQ) and 163 to 167 (QRIVR).

Belongs to the IPP transferase family. Monomer. Mg(2+) is required as a cofactor.

The catalysed reaction is adenosine(37) in tRNA + dimethylallyl diphosphate = N(6)-dimethylallyladenosine(37) in tRNA + diphosphate. Catalyzes the transfer of a dimethylallyl group onto the adenine at position 37 in tRNAs that read codons beginning with uridine, leading to the formation of N6-(dimethylallyl)adenosine (i(6)A). The protein is tRNA dimethylallyltransferase of Brucella suis biovar 1 (strain 1330).